The primary structure comprises 129 residues: NADPH-dependent 7-cyano-7-deazaguanine reductase (129 aa).

Cys-43 acts as the Thioimide intermediate in catalysis. The active-site Proton donor is the Asp-50. Residues 65 to 67 (VEL) and 84 to 85 (HE) each bind substrate.

Belongs to the GTP cyclohydrolase I family. QueF type 1 subfamily.

Its subcellular location is the cytoplasm. It catalyses the reaction 7-aminomethyl-7-carbaguanine + 2 NADP(+) = 7-cyano-7-deazaguanine + 2 NADPH + 3 H(+). It participates in tRNA modification; tRNA-queuosine biosynthesis. Its function is as follows. Catalyzes the NADPH-dependent reduction of 7-cyano-7-deazaguanine (preQ0) to 7-aminomethyl-7-deazaguanine (preQ1). This chain is NADPH-dependent 7-cyano-7-deazaguanine reductase, found in Aquifex aeolicus (strain VF5).